We begin with the raw amino-acid sequence, 228 residues long: Small ribosomal subunit protein uS3 (228 aa).

In terms of domain architecture, KH type-2 spans 39 to 107 (TREYLQDKLK…PVHINIEEIR (69 aa)).

Belongs to the universal ribosomal protein uS3 family. As to quaternary structure, part of the 30S ribosomal subunit. Forms a tight complex with proteins S10 and S14.

Its function is as follows. Binds the lower part of the 30S subunit head. Binds mRNA in the 70S ribosome, positioning it for translation. This Pseudomonas entomophila (strain L48) protein is Small ribosomal subunit protein uS3.